A 369-amino-acid chain; its full sequence is MKSGRFIGVMSGTSLDGVDVVLATIDEHRVAQLASLSWPIPVSLKQAVLDICQGQQLTLSQFGQLDTQLGRLFADAVKALLKEQNLQARDIVAIGCHGQTVWHEPTGVAPHTLQIGDNNQIVARTGITVVGDFRRRDIALGGQGAPLVPAFHHALLAHPTERRMVLNIGGIANLSLLIPGQPVGGYDTGPGNMLMDAWIWRQAGKPYDKDAEWARAGKVILPLLQNMLSDPYFSQPAPKSTGREYFNYGWLERHLRHFPGVDPRDVQATLAELTAVTISEQVLLSGGCERLMVCGGGSRNPLLMARLAALLPGTEVTTTDAVGISGDDMEALAFAWLAWRTLAGLPGNLPSVTGASQETVLGAIFPANS.

12-19 is a binding site for ATP; it reads GTSLDGVD.

It belongs to the anhydro-N-acetylmuramic acid kinase family.

It catalyses the reaction 1,6-anhydro-N-acetyl-beta-muramate + ATP + H2O = N-acetyl-D-muramate 6-phosphate + ADP + H(+). Its pathway is amino-sugar metabolism; 1,6-anhydro-N-acetylmuramate degradation. It participates in cell wall biogenesis; peptidoglycan recycling. Catalyzes the specific phosphorylation of 1,6-anhydro-N-acetylmuramic acid (anhMurNAc) with the simultaneous cleavage of the 1,6-anhydro ring, generating MurNAc-6-P. Is required for the utilization of anhMurNAc either imported from the medium or derived from its own cell wall murein, and thus plays a role in cell wall recycling. The sequence is that of Anhydro-N-acetylmuramic acid kinase from Escherichia coli O157:H7.